Here is a 226-residue protein sequence, read N- to C-terminus: ATP synthase F(0) complex subunit a (226 aa).

6 helical membrane-spanning segments follow: residues 6 to 26 (FASF…IIMF), 68 to 88 (WSLM…LGLL), 97 to 117 (QLSM…ITGF), 138 to 158 (IPML…ALAV), 164 to 184 (ITAG…LTSI), and 189 to 209 (AILT…VALI).

Belongs to the ATPase A chain family. In terms of assembly, component of the ATP synthase complex composed at least of ATP5F1A/subunit alpha, ATP5F1B/subunit beta, ATP5MC1/subunit c (homooctomer), MT-ATP6/subunit a, MT-ATP8/subunit 8, ATP5ME/subunit e, ATP5MF/subunit f, ATP5MG/subunit g, ATP5MK/subunit k, ATP5MJ/subunit j, ATP5F1C/subunit gamma, ATP5F1D/subunit delta, ATP5F1E/subunit epsilon, ATP5PF/subunit F6, ATP5PB/subunit b, ATP5PD/subunit d, ATP5PO/subunit OSCP. ATP synthase complex consists of a soluble F(1) head domain (subunits alpha(3) and beta(3)) - the catalytic core - and a membrane F(0) domain - the membrane proton channel (subunits c, a, 8, e, f, g, k and j). These two domains are linked by a central stalk (subunits gamma, delta, and epsilon) rotating inside the F1 region and a stationary peripheral stalk (subunits F6, b, d, and OSCP). Interacts with DNAJC30; interaction is direct.

Its subcellular location is the mitochondrion inner membrane. The enzyme catalyses H(+)(in) = H(+)(out). Its function is as follows. Subunit a, of the mitochondrial membrane ATP synthase complex (F(1)F(0) ATP synthase or Complex V) that produces ATP from ADP in the presence of a proton gradient across the membrane which is generated by electron transport complexes of the respiratory chain. ATP synthase complex consist of a soluble F(1) head domain - the catalytic core - and a membrane F(1) domain - the membrane proton channel. These two domains are linked by a central stalk rotating inside the F(1) region and a stationary peripheral stalk. During catalysis, ATP synthesis in the catalytic domain of F(1) is coupled via a rotary mechanism of the central stalk subunits to proton translocation. With the subunit c (ATP5MC1), forms the proton-conducting channel in the F(0) domain, that contains two crucial half-channels (inlet and outlet) that facilitate proton movement from the mitochondrial intermembrane space (IMS) into the matrix. Protons are taken up via the inlet half-channel and released through the outlet half-channel, following a Grotthuss mechanism. This is ATP synthase F(0) complex subunit a from Ictidomys tridecemlineatus (Thirteen-lined ground squirrel).